A 385-amino-acid chain; its full sequence is Glucans biosynthesis protein C (385 aa).

Helical transmembrane passes span 17 to 37 (AWLMLLGIPFHISLIYSSHTW), 60 to 80 (MLVFFVISGYFSYMLFLRYPL), 91 to 111 (VGIPMLTAIPLLTLPQFIMLQ), 137 to 157 (ISHLWFLLVLVVMTTLCVWIF), 173 to 193 (KFSMVKLSVIFLCLGIGYAVI), 212 to 232 (FIVMQTLFYLPFFILGALAFI), 239 to 259 (LFTTPSRGCTLAAALAFVAYL), 274 to 294 (TESVITMVLGLWMVNVVFSFG), 311 to 331 (ASLFIYLVHHPLTLFFGAYIT), and 338 to 358 (WLGFLCGLIFVVGIAIILYEI).

It belongs to the acyltransferase 3 family. OpgC subfamily.

Its subcellular location is the cell membrane. It participates in glycan metabolism; osmoregulated periplasmic glucan (OPG) biosynthesis. Functionally, necessary for the succinyl substitution of periplasmic glucans. Could catalyze the transfer of succinyl residues from the cytoplasmic side of the membrane to the nascent glucan backbones on the periplasmic side of the membrane. The protein is Glucans biosynthesis protein C of Shigella boydii serotype 4 (strain Sb227).